The following is a 155-amino-acid chain: Endoribonuclease YbeY (155 aa).

Zn(2+)-binding residues include His-114, His-118, and His-124.

This sequence belongs to the endoribonuclease YbeY family. It depends on Zn(2+) as a cofactor.

Its subcellular location is the cytoplasm. Single strand-specific metallo-endoribonuclease involved in late-stage 70S ribosome quality control and in maturation of the 3' terminus of the 16S rRNA. The sequence is that of Endoribonuclease YbeY from Enterobacter sp. (strain 638).